A 709-amino-acid polypeptide reads, in one-letter code: UV-stimulated scaffold protein A (709 aa).

Positions 1-10 are enriched in basic and acidic residues; it reads MDQKLSKLVE. The disordered stretch occupies residues 1 to 20; sequence MDQKLSKLVEELTTSGEPRL. The VHS-like stretch occupies residues 2–145; sequence DQKLSKLVEE…HFLRHNKKVD (144 aa). Residues 165–199 adopt a coiled-coil conformation; the sequence is KHLDKIYQERASQAEREMQEMSGEIESCLTEVESC. Disordered regions lie at residues 230 to 289 and 386 to 406; these read SCAG…DSDL and EGGE…EDDE. Acidic residues predominate over residues 280–289; that stretch reads PSDEDEDSDL. Residues serine 281 and serine 287 each carry the phosphoserine modification. Positions 386–395 are enriched in basic and acidic residues; it reads EGGERRRTEA. Residues 397–406 show a composition bias toward acidic residues; it reads GDAEEDEDDE. Residue lysine 414 forms a Glycyl lysine isopeptide (Lys-Gly) (interchain with G-Cter in ubiquitin) linkage. Residues 469–495 form a disordered region; that stretch reads DHLPPPSSASPSRALPEPQEAQKLAAE. Residues 477-486 show a composition bias toward low complexity; the sequence is ASPSRALPEP. The UVSSA-type zinc-finger motif lies at 564–591; that stretch reads QHWCRAPRPDGRLCERQDRLKCPFHGKI. Cysteine 567, cysteine 577, cysteine 585, and histidine 588 together coordinate Zn(2+). The tract at residues 588-655 is disordered; sequence HGKIVPRDDE…GKGRGKKRRY (68 aa). The segment covering 592 to 632 has biased composition (basic and acidic residues); the sequence is VPRDDEGRPLDPEDRAREQRRQLQKQERPEWQDPELMRDVE. Positions 646 to 655 are enriched in basic residues; sequence GKGRGKKRRY.

This sequence belongs to the UVSSA family. In terms of assembly, interacts with the elongating form of RNA polymerase II (RNA pol IIo) during transcription stress. Interacts with the TFIIH complex during transcription stress. Interacts with ERCC6. Interacts with ERCC8. Interacts with USP7. Post-translationally, monoubiquitinated at Lys-414 in response to transcription stress; this promotes efficient transfer of TFIIH to stalled RNA polymerase II.

The protein resides in the chromosome. In terms of biological role, factor involved in transcription-coupled nucleotide excision repair (TC-NER), a mechanism that rapidly removes RNA polymerase II-blocking lesions from the transcribed strand of active genes. Acts as a key adapter that promotes recruitment of factors involved in TC-NER. Facilitates the ubiquitination of the elongating form of RNA polymerase II (RNA pol IIo) at DNA damage sites, thereby promoting RNA pol IIo backtracking and access by the TC-NER machinery to lesion sites. Also promotes stabilization of ERCC6/CSB by recruiting deubiquitinating enzyme USP7 to TC-NER complexes, preventing UV-induced degradation of ERCC6 by the proteasome. Mediates the recruitment of the TFIIH complex and other factors that are required for nucleotide excision repair to RNA polymerase II. Also required to inactivate stalled RNA polymerase II by blocking the access of TCEA1/TFIIS, thereby preventing reactivation of RNA polymerase II. Not involved in processing oxidative damage. The protein is UV-stimulated scaffold protein A of Homo sapiens (Human).